We begin with the raw amino-acid sequence, 313 residues long: MMENYKHTTVLLDEAVNGLNIRPDGIYIDGTFGRGGHSRLILSQLGEEGRLLAIDRDPQAIAVAKTIDDPRFSIIHGPFSALGEYVAERDLIGKIDGILLDLGVSSPQLDDAERGFSFMRDGPLDMRMDPTRGQSAAEWLQTAEEADIAWVLKTYGEERFAKRIARAIVERNREQPMTRTKELAEVVAAATPVKDKFKHPATRTFQAVRIWVNSELEEIEQALKSSLNVLAPGGRLSIISFHSLEDRIVKRFMRENSRGPQVPAGLPMTEEQLKKLGGRQLRALGKLMPGEEEVAENPRARSSVLRIAERTNA.

Residues 35–37 (GGH), D55, F79, D101, and Q108 contribute to the S-adenosyl-L-methionine site.

Belongs to the methyltransferase superfamily. RsmH family.

The protein resides in the cytoplasm. It catalyses the reaction cytidine(1402) in 16S rRNA + S-adenosyl-L-methionine = N(4)-methylcytidine(1402) in 16S rRNA + S-adenosyl-L-homocysteine + H(+). Specifically methylates the N4 position of cytidine in position 1402 (C1402) of 16S rRNA. The protein is Ribosomal RNA small subunit methyltransferase H of Escherichia coli O139:H28 (strain E24377A / ETEC).